Here is a 780-residue protein sequence, read N- to C-terminus: Neutral ceramidase (780 aa).

Topologically, residues 1-12 are cytoplasmic; it reads MAKRTFSNLETF. The chain crosses the membrane as a helical; Signal-anchor for type II membrane protein span at residues 13 to 33; it reads LIFLLVMMSAITVALLSLLFI. Residues 34 to 780 are Lumenal-facing; sequence TSGTIENHKD…TSPAFEVVTI (747 aa). A disordered region spans residues 47–90; that stretch reads HFFSTTQSPPATQGSTAAQRSTATQHSTATQSSTATQTSPVPLT. The segment covering 57 to 85 has biased composition (low complexity); the sequence is ATQGSTAAQRSTATQHSTATQSSTATQTS. The O-linked (GalNAc...) threonine glycan is linked to threonine 62. O-linked (GalNAc...) serine glycosylation occurs at serine 67. Threonine 68 and threonine 70 each carry an O-linked (GalNAc...) threonine glycan. An O-linked (GalNAc...) serine glycan is attached at serine 73. O-linked (GalNAc...) threonine glycosylation is found at threonine 74 and threonine 76. O-linked (GalNAc...) serine glycans are attached at residues serine 78 and serine 79. O-linked (GalNAc...) threonine glycans are attached at residues threonine 80, threonine 82, and threonine 84. N-linked (GlcNAc...) asparagine glycosylation occurs at asparagine 98. Leucine 134 is a Ca(2+) binding site. N-linked (GlcNAc...) asparagine glycosylation occurs at asparagine 151. Residue histidine 194 coordinates Zn(2+). Asparagine 217 carries N-linked (GlcNAc...) asparagine glycosylation. Zn(2+) is bound at residue histidine 303. An N-linked (GlcNAc...) asparagine glycan is attached at asparagine 308. Serine 354 (nucleophile) is an active-site residue. Cystine bridges form between cysteine 362-cysteine 376 and cysteine 369-cysteine 384. N-linked (GlcNAc...) asparagine glycans are attached at residues asparagine 440 and asparagine 468. A disulfide bond links cysteine 448 and cysteine 498. Glutamate 540 contributes to the Zn(2+) binding site. A glycan (N-linked (GlcNAc...) asparagine) is linked at asparagine 564. Position 579 (tyrosine 579) interacts with Zn(2+). Ca(2+) contacts are provided by aspartate 712, serine 714, and threonine 717. N-linked (GlcNAc...) asparagine glycosylation is present at asparagine 730. Residues 770–780 form a required for correct folding and localization region; it reads GTSPAFEVVTI. O-linked (GalNAc...) threonine glycosylation is present at threonine 779.

This sequence belongs to the neutral ceramidase family. Requires Zn(2+) as cofactor. Post-translationally, proteolytic cleavage of the N-terminus removes the signal-anchor and produces a soluble form of the protein. N-glycosylated. Required for enzyme activity. In terms of processing, O-glycosylated. Required to retain it as a type II membrane protein at the cell surface. Post-translationally, phosphorylated. May prevent ubiquitination and subsequent degradation. Ubiquitinated, leading to its degradation by the proteasome. Ubiquitination is triggered by nitric oxide. As to expression, primarily expressed in intestine. Ubiquitously expressed with higher levels in kidney, skeletal muscle and heart. The ubiquitous expression observed for ASAH2 might be an experimental artifact due to the paralog ASAH2B.

The protein localises to the cell membrane. Its subcellular location is the membrane raft. It is found in the membrane. It localises to the caveola. The protein resides in the golgi apparatus membrane. The protein localises to the mitochondrion. Its subcellular location is the secreted. It is found in the extracellular exosome. The enzyme catalyses an N-acylsphing-4-enine + H2O = sphing-4-enine + a fatty acid. It catalyses the reaction N-dodecanoylsphing-4-enine + H2O = dodecanoate + sphing-4-enine. The catalysed reaction is N-hexadecanoylsphing-4-enine + H2O = sphing-4-enine + hexadecanoate. It carries out the reaction N-octanoylsphing-4-enine + H2O = octanoate + sphing-4-enine. The enzyme catalyses N-(hexanoyl)sphing-4-enine + H2O = hexanoate + sphing-4-enine. It catalyses the reaction N-octadecanoylsphing-4-enine + H2O = sphing-4-enine + octadecanoate. The catalysed reaction is N-tetradecanoylsphing-4-enine + H2O = tetradecanoate + sphing-4-enine. It carries out the reaction N-(9Z-octadecenoyl)-sphing-4-enine + H2O = sphing-4-enine + (9Z)-octadecenoate. The enzyme catalyses N-(15Z-tetracosenoyl)-sphing-4-enine + H2O = (15Z)-tetracosenoate + sphing-4-enine. It catalyses the reaction sphinganine + hexadecanoate = N-hexadecanoylsphinganine + H2O. The catalysed reaction is N-(octadecanoyl)-sphinganine + H2O = sphinganine + octadecanoate. It functions in the pathway lipid metabolism; sphingolipid metabolism. Its activity is regulated as follows. Inhibited by dithiothreitol (DTT) and 2-mercaptoethanol. Activity is mildly stimulated by Ca(2+) and Mg(2+), but is not inhibited by EDTA. Activity is inhibited by millimolar levels of Fe(2+), Zn(2+) and Cu(2+). Inhibited by cholesterol. Plasma membrane ceramidase that hydrolyzes sphingolipid ceramides into sphingosine and free fatty acids at neutral pH. Ceramides, sphingosine, and its phosphorylated form sphingosine-1-phosphate are bioactive lipids that mediate cellular signaling pathways regulating several biological processes including cell proliferation, apoptosis and differentiation. Also catalyzes the reverse reaction allowing the synthesis of ceramides from fatty acids and sphingosine. Together with sphingomyelinase, participates in the production of sphingosine and sphingosine-1-phosphate from the degradation of sphingomyelin, a sphingolipid enriched in the plasma membrane of cells. Also participates in the hydrolysis of ceramides from the extracellular milieu allowing the production of sphingosine-1-phosphate inside and outside cells. This is the case for instance with the digestion of dietary sphingolipids in the intestinal tract. The protein is Neutral ceramidase (ASAH2) of Homo sapiens (Human).